A 520-amino-acid chain; its full sequence is ATP synthase subunit alpha 2 (520 aa).

176 to 183 (GDRQTGKT) contributes to the ATP binding site.

The protein belongs to the ATPase alpha/beta chains family. As to quaternary structure, F-type ATPases have 2 components, CF(1) - the catalytic core - and CF(0) - the membrane proton channel. CF(1) has five subunits: alpha(3), beta(3), gamma(1), delta(1), epsilon(1). CF(0) has three main subunits: a(1), b(2) and c(9-12). The alpha and beta chains form an alternating ring which encloses part of the gamma chain. CF(1) is attached to CF(0) by a central stalk formed by the gamma and epsilon chains, while a peripheral stalk is formed by the delta and b chains.

It localises to the cell inner membrane. The enzyme catalyses ATP + H2O + 4 H(+)(in) = ADP + phosphate + 5 H(+)(out). Its function is as follows. Produces ATP from ADP in the presence of a proton gradient across the membrane. The alpha chain is a regulatory subunit. The chain is ATP synthase subunit alpha 2 from Polaromonas naphthalenivorans (strain CJ2).